A 288-amino-acid chain; its full sequence is Large ribosomal subunit protein uL2 (288 aa).

The interval 232–265 (GTAMNPVDHPHGGGEGKTKGKHPESPWGWKTKGY) is disordered. The span at 239-255 (DHPHGGGEGKTKGKHPE) shows a compositional bias: basic and acidic residues.

Belongs to the universal ribosomal protein uL2 family. As to quaternary structure, part of the 50S ribosomal subunit. Forms a bridge to the 30S subunit in the 70S ribosome.

Functionally, one of the primary rRNA binding proteins. Required for association of the 30S and 50S subunits to form the 70S ribosome, for tRNA binding and peptide bond formation. It has been suggested to have peptidyltransferase activity; this is somewhat controversial. Makes several contacts with the 16S rRNA in the 70S ribosome. The chain is Large ribosomal subunit protein uL2 from Hydrogenobaculum sp. (strain Y04AAS1).